A 231-amino-acid chain; its full sequence is ATP-dependent dethiobiotin synthetase BioD 2 (231 aa).

Position 13–18 (13–18 (SVGKTV)) interacts with ATP. A Mg(2+)-binding site is contributed by T17. Residue K38 is part of the active site. ATP contacts are provided by residues D55, 112 to 115 (EGTG), 172 to 173 (NR), 201 to 203 (PYL), and Q208. Mg(2+) is bound by residues D55 and E112.

This sequence belongs to the dethiobiotin synthetase family. Homodimer. It depends on Mg(2+) as a cofactor.

Its subcellular location is the cytoplasm. The catalysed reaction is (7R,8S)-7,8-diammoniononanoate + CO2 + ATP = (4R,5S)-dethiobiotin + ADP + phosphate + 3 H(+). The protein operates within cofactor biosynthesis; biotin biosynthesis; biotin from 7,8-diaminononanoate: step 1/2. Catalyzes a mechanistically unusual reaction, the ATP-dependent insertion of CO2 between the N7 and N8 nitrogen atoms of 7,8-diaminopelargonic acid (DAPA, also called 7,8-diammoniononanoate) to form a ureido ring. This Salmonella typhimurium (strain LT2 / SGSC1412 / ATCC 700720) protein is ATP-dependent dethiobiotin synthetase BioD 2.